The primary structure comprises 413 residues: uncharacterized protein (413 aa).

Residues 14–34 (LLFFTVVIIPIFYYIYKIVYL) traverse the membrane as a helical segment. Asn-46, Asn-55, Asn-103, Asn-171, Asn-179, Asn-184, Asn-220, Asn-252, Asn-260, Asn-273, Asn-362, Asn-366, Asn-374, Asn-378, Asn-393, and Asn-408 each carry an N-linked (GlcNAc...) asparagine; by host glycan. Over residues 250-263 (TKNSTETNSDNNSE) the composition is skewed to low complexity. The interval 250–277 (TKNSTETNSDNNSEIVSETNSETNYSTP) is disordered. Positions 264 to 277 (IVSETNSETNYSTP) are enriched in polar residues.

The protein resides in the membrane. This is an uncharacterized protein from Acanthamoeba polyphaga (Amoeba).